The sequence spans 184 residues: UPF0397 protein SAOUHSC_03020 (184 aa).

5 helical membrane-spanning segments follow: residues 11 to 31, 44 to 64, 77 to 97, 116 to 136, and 148 to 168; these read VVAIGIGAAVFVILGRFVVIP, AFLALISAIFGPFAGLMTGLV, AWWSWVICSGIIGCLYGWIGL, IGQIIANIICWALIAPTLDIL, and QGVISAVLNIISVGIIGTILL.

This sequence belongs to the UPF0397 family.

It is found in the cell membrane. In Staphylococcus aureus (strain NCTC 8325 / PS 47), this protein is UPF0397 protein SAOUHSC_03020.